The following is a 361-amino-acid chain: tRNA/tmRNA (uracil-C(5))-methyltransferase (361 aa).

Residues Q183, Y211, N216, E232, and D294 each contribute to the S-adenosyl-L-methionine site. C319 serves as the catalytic Nucleophile. The active-site Proton acceptor is the E353.

This sequence belongs to the class I-like SAM-binding methyltransferase superfamily. RNA M5U methyltransferase family. TrmA subfamily.

The enzyme catalyses uridine(54) in tRNA + S-adenosyl-L-methionine = 5-methyluridine(54) in tRNA + S-adenosyl-L-homocysteine + H(+). It catalyses the reaction uridine(341) in tmRNA + S-adenosyl-L-methionine = 5-methyluridine(341) in tmRNA + S-adenosyl-L-homocysteine + H(+). Its function is as follows. Dual-specificity methyltransferase that catalyzes the formation of 5-methyluridine at position 54 (m5U54) in all tRNAs, and that of position 341 (m5U341) in tmRNA (transfer-mRNA). This is tRNA/tmRNA (uracil-C(5))-methyltransferase from Acinetobacter baumannii (strain AB307-0294).